A 293-amino-acid chain; its full sequence is 4-hydroxy-tetrahydrodipicolinate synthase (293 aa).

Thr-45 is a binding site for pyruvate. Tyr-133 acts as the Proton donor/acceptor in catalysis. Catalysis depends on Lys-161, which acts as the Schiff-base intermediate with substrate. Ile-203 serves as a coordination point for pyruvate.

Belongs to the DapA family. In terms of assembly, homotetramer; dimer of dimers.

The protein resides in the cytoplasm. It catalyses the reaction L-aspartate 4-semialdehyde + pyruvate = (2S,4S)-4-hydroxy-2,3,4,5-tetrahydrodipicolinate + H2O + H(+). It functions in the pathway amino-acid biosynthesis; L-lysine biosynthesis via DAP pathway; (S)-tetrahydrodipicolinate from L-aspartate: step 3/4. Its function is as follows. Catalyzes the condensation of (S)-aspartate-beta-semialdehyde [(S)-ASA] and pyruvate to 4-hydroxy-tetrahydrodipicolinate (HTPA). The polypeptide is 4-hydroxy-tetrahydrodipicolinate synthase (Exiguobacterium sibiricum (strain DSM 17290 / CCUG 55495 / CIP 109462 / JCM 13490 / 255-15)).